A 236-amino-acid polypeptide reads, in one-letter code: tRNA (guanine-N(7)-)-methyltransferase (236 aa).

The disordered stretch occupies residues 1–23 (MEADVQRAQQAQLEKGSSVPPWT). S-adenosyl-L-methionine is bound by residues Asp-69, Glu-94, Asn-121, and Asp-144. Residue Asp-144 is part of the active site. Substrate-binding residues include Lys-148 and Asp-180.

It belongs to the class I-like SAM-binding methyltransferase superfamily. TrmB family.

The catalysed reaction is guanosine(46) in tRNA + S-adenosyl-L-methionine = N(7)-methylguanosine(46) in tRNA + S-adenosyl-L-homocysteine. Its pathway is tRNA modification; N(7)-methylguanine-tRNA biosynthesis. Functionally, catalyzes the formation of N(7)-methylguanine at position 46 (m7G46) in tRNA. The protein is tRNA (guanine-N(7)-)-methyltransferase of Synechococcus sp. (strain JA-3-3Ab) (Cyanobacteria bacterium Yellowstone A-Prime).